The chain runs to 189 residues: Inosine triphosphate pyrophosphatase (189 aa).

14–19 (TGNQNK) provides a ligand contact to ITP. A Mg(2+)-binding site is contributed by Glu42. Residues Lys54, 70–71 (DT), Lys87, 146–149 (FGWD), Lys167, and 172–173 (HR) each bind ITP.

Belongs to the HAM1 NTPase family. In terms of assembly, homodimer. Requires Mg(2+) as cofactor. Mn(2+) serves as cofactor.

The protein resides in the cytoplasm. The protein localises to the nucleus. It catalyses the reaction ITP + H2O = IMP + diphosphate + H(+). The enzyme catalyses dITP + H2O = dIMP + diphosphate + H(+). The catalysed reaction is XTP + H2O = XMP + diphosphate + H(+). In terms of biological role, pyrophosphatase that hydrolyzes non-canonical purine nucleotides such as inosine triphosphate (ITP), deoxyinosine triphosphate (dITP) or xanthosine 5'-triphosphate (XTP) to their respective monophosphate derivatives. The enzyme does not distinguish between the deoxy- and ribose forms. Probably excludes non-canonical purines from RNA and DNA precursor pools, thus preventing their incorporation into RNA and DNA and avoiding chromosomal lesions. The protein is Inosine triphosphate pyrophosphatase of Pyricularia oryzae (strain 70-15 / ATCC MYA-4617 / FGSC 8958) (Rice blast fungus).